We begin with the raw amino-acid sequence, 861 residues long: Alpha-actinin A (861 aa).

The segment at Met1 to His239 is actin-binding. Calponin-homology (CH) domains lie at Ile22 to Ala127 and Leu136 to Ser242. Spectrin repeat units lie at residues His240–Lys365, Ala366–Lys480, Ser481–Lys601, and Val602–Val714. 2 consecutive EF-hand domains span residues Glu729–Glu764 and Leu765–Gly800. Residues Asp742, Asp744, Asp746, Lys748, Glu753, Asp778, Asp780, Asn782, Thr784, and Glu789 each coordinate Ca(2+).

It belongs to the alpha-actinin family. In terms of assembly, homodimer; antiparallel.

Its subcellular location is the cytoplasm. It is found in the cell cortex. The protein resides in the contractile vacuole. It localises to the cytoplasmic vesicle. The protein localises to the phagosome. Its function is as follows. F-actin cross-linking protein which is thought to anchor actin to a variety of intracellular structures. This is a bundling protein. Increases the actin-stimulated ATPase activity of myosin. Involved in vegetative cell growth, phagocytosis, motility and development, probably through stabilization of the actin network in the cortical cytoskeleton. This chain is Alpha-actinin A (abpA), found in Dictyostelium discoideum (Social amoeba).